Consider the following 626-residue polypeptide: Leucine-rich repeat and fibronectin type-III domain-containing protein 3 (626 aa).

An N-terminal signal peptide occupies residues 1–16 (MAVLPLLLCLLPLAPA). Topologically, residues 17 to 539 (SSPPQPATSS…PHAPFLGGTM (523 aa)) are extracellular. Residues 19 to 59 (PPQPATSSPCPRRCRCQTQSLPLSVLCPGAGLLFVPPSLDR) form the LRRNT domain. LRR repeat units lie at residues 84–105 (GLLH…AFAD), 108–129 (ALRA…QLRG), 132–153 (NLRH…ALDD), 157–178 (TLED…ALGR), 181–202 (NVNT…AFSR), and 205–226 (KLAR…PLFS). Positions 249–295 (NPLHCNCELVWLRRLAREDDLEACASPPALGGRYFWAVGEEEFVCEP) constitute an LRRCT domain. Residues 295–382 (PPVVTHRSPP…GEATAAVELT (88 aa)) form the Ig-like domain. The region spanning 308 to 395 (PAGRPAALRC…PPPPQLANST (88 aa)) is the Fibronectin type-III 1 domain. C317 and C366 are joined by a disulfide. N-linked (GlcNAc...) asparagine glycosylation is found at N339, N348, and N393. Positions 382 to 423 (TVGPPPPPQLANSTSCDPPRDGEPDALTPPSAASASAKVADT) are disordered. Over residues 406 to 423 (DALTPPSAASASAKVADT) the composition is skewed to low complexity. In terms of domain architecture, Fibronectin type-III 2 spans 425–523 (APTDRGVQVT…GCARFSTEPA (99 aa)). Residues 540 to 560 (IIALGGVIVASVLVFIFVLLL) traverse the membrane as a helical segment. Topologically, residues 561-626 (RYKVHGVQPP…WGPSHEPAGP (66 aa)) are cytoplasmic.

The protein belongs to the LRFN family. As to quaternary structure, can form heteromeric complexes with LRFN1, LRFN2, LRFN4 and LRFN5. Able to form homomeric complexes across cell junctions, between adjacent cells. Does not interact with DLG4. Post-translationally, N-glycosylated. Expressed in brain. Within brain, expressed in hippocampus, cerebellum, olfactory bulb and forebrain (at protein level).

It is found in the cell membrane. It localises to the cell projection. Its subcellular location is the axon. The protein localises to the dendrite. The protein resides in the synapse. It is found in the presynaptic cell membrane. It localises to the postsynaptic cell membrane. Functionally, cell adhesion molecule that mediates homophilic cell-cell adhesion in a Ca(2+)-independent manner. Promotes neurite outgrowth in hippocampal neurons. The sequence is that of Leucine-rich repeat and fibronectin type-III domain-containing protein 3 from Rattus norvegicus (Rat).